The chain runs to 319 residues: MTVIDNHEALAKEGDNGLSEAGARDYFELLKPRVMSLVVFTAFAGLVLAPGHINPVLGLIAILCIAVGAGASGALNMWYDADIDAIMTRTAKRPIPAGRVAPSEALAFGLVLSGFSVTILGLAVNWLSAAILAFTIFFYAVVYTMWLKRSTPQNIVIGGAAGAFPPVIGWACVTGNVTIESVVLFLIIFLWTPAHFWALALFKMGDYEAVGVPMLPNVAGVPTTKNQIVAYAVLTAIIGVVPSFMGFASLGYGVVATVLGVIFVHCSISVWRMPDGDVKMVPAKKLFAFSIFYLFAIFSALLIDRLVAVLMSGGVGGWL.

A run of 9 helical transmembrane segments spans residues 34–54 (VMSL…GHIN), 55–75 (PVLG…SGAL), 95–115 (IPAG…LSGF), 119–139 (ILGL…IFFY), 155–175 (IVIG…CVTG), 182–202 (VVLF…LALF), 221–241 (VPTT…IGVV), 244–264 (FMGF…VIFV), and 291–311 (IFYL…AVLM).

Belongs to the UbiA prenyltransferase family. Protoheme IX farnesyltransferase subfamily.

Its subcellular location is the cell inner membrane. The enzyme catalyses heme b + (2E,6E)-farnesyl diphosphate + H2O = Fe(II)-heme o + diphosphate. It functions in the pathway porphyrin-containing compound metabolism; heme O biosynthesis; heme O from protoheme: step 1/1. Functionally, converts heme B (protoheme IX) to heme O by substitution of the vinyl group on carbon 2 of heme B porphyrin ring with a hydroxyethyl farnesyl side group. The polypeptide is Protoheme IX farnesyltransferase (Rhizobium rhizogenes (strain K84 / ATCC BAA-868) (Agrobacterium radiobacter)).